Here is a 242-residue protein sequence, read N- to C-terminus: Large ribosomal subunit protein uL1 (242 aa).

The protein belongs to the universal ribosomal protein uL1 family. In terms of assembly, part of the 50S ribosomal subunit.

Its function is as follows. Binds directly to 23S rRNA. The L1 stalk is quite mobile in the ribosome, and is involved in E site tRNA release. Protein L1 is also a translational repressor protein, it controls the translation of the L11 operon by binding to its mRNA. The polypeptide is Large ribosomal subunit protein uL1 (Dictyoglomus turgidum (strain DSM 6724 / Z-1310)).